A 292-amino-acid polypeptide reads, in one-letter code: 4-hydroxy-tetrahydrodipicolinate synthase (292 aa).

Thr-45 is a binding site for pyruvate. Tyr-133 functions as the Proton donor/acceptor in the catalytic mechanism. The active-site Schiff-base intermediate with substrate is the Lys-161. Ile-203 lines the pyruvate pocket.

It belongs to the DapA family. As to quaternary structure, homotetramer; dimer of dimers.

The protein localises to the cytoplasm. The catalysed reaction is L-aspartate 4-semialdehyde + pyruvate = (2S,4S)-4-hydroxy-2,3,4,5-tetrahydrodipicolinate + H2O + H(+). It participates in amino-acid biosynthesis; L-lysine biosynthesis via DAP pathway; (S)-tetrahydrodipicolinate from L-aspartate: step 3/4. Functionally, catalyzes the condensation of (S)-aspartate-beta-semialdehyde [(S)-ASA] and pyruvate to 4-hydroxy-tetrahydrodipicolinate (HTPA). This is 4-hydroxy-tetrahydrodipicolinate synthase from Vibrio vulnificus (strain CMCP6).